A 554-amino-acid polypeptide reads, in one-letter code: Intraflagellar transport protein 56 (554 aa).

The segment at methionine 1–isoleucine 27 is disordered. Positions aspartate 18 to isoleucine 27 are enriched in basic residues. 4 TPR repeats span residues aspartate 57–asparagine 90, glutamate 92–arginine 125, lysine 151–tyrosine 184, and alanine 468–arginine 501.

It belongs to the IFT56 family. Component of the IFT complex B. Interacts with IFT46; the interaction is direct. As to expression, high expression detected in testis. Detected also retina, kidney, lung and brain tissue. The expression level is low in spleen. Expressed in the developing liver. Present in the airway epithelial cells and the testes (at protein level).

The protein resides in the cell projection. Its subcellular location is the cilium. Functionally, component of the intraflagellar transport (IFT) complex B required for transport of proteins in the motile cilium. Required for transport of specific ciliary cargo proteins related to motility, while it is neither required for IFT complex B assembly or motion nor for cilium assembly. Required for efficient coupling between the accumulation of GLI2 and GLI3 at the ciliary tips and their dissociation from the negative regulator SUFU. Plays a key role in maintaining the integrity of the IFT complex B and the proper ciliary localization of the IFT complex B components. Not required for IFT complex A ciliary localization or function. Essential for maintaining proper microtubule organization within the ciliary axoneme. This is Intraflagellar transport protein 56 from Mus musculus (Mouse).